The sequence spans 293 residues: Probable endonuclease 4 (293 aa).

Positions 77, 118, 153, 187, 190, 221, 234, 236, and 266 each coordinate Zn(2+).

The protein belongs to the AP endonuclease 2 family. The cofactor is Zn(2+).

It catalyses the reaction Endonucleolytic cleavage to 5'-phosphooligonucleotide end-products.. Endonuclease IV plays a role in DNA repair. It cleaves phosphodiester bonds at apurinic or apyrimidinic (AP) sites, generating a 3'-hydroxyl group and a 5'-terminal sugar phosphate. This is Probable endonuclease 4 from Mesoplasma florum (strain ATCC 33453 / NBRC 100688 / NCTC 11704 / L1) (Acholeplasma florum).